The sequence spans 445 residues: METIFAQSSSFGKAGVAVFRVSGTKSLEVLKLLTGKSNFKPRFMYYQKLTSPESNDLIDNAMVVYFKAPNSFTGEDVVEIHTHGSKAISIMLTNALLNIPGVRLAEAGEFTKRAFLNNKFDLTAAEGIADLINAETIMQHKQAIRQAGGALEELYNSWRSQLLRIISLLEAYIDFPDEDIPESVLKDVTNTHKTLINTISEYLNDNRKGELLRSGLKLAIIGPPNAGKSSLLNFLMRRDIAIVSNIAGTTRDIIEGHLDIGGYPIILQDTAGIRGESNDVIEQEGIKRAIDSAKKADIKIVMFDAETLDSAVNEDITGLIDENTIVIINKIDLIPENRIFNIENKYRCLKVSIKNNIALPSILKNIEEIAENMAGFTETPYITNERHRHHLKQALVYLKDFNLDNDLVLATEDIRMTMHRIGAITGIIDVEEILGEIFKNFCIGK.

Positions 20, 79, and 119 each coordinate (6S)-5-formyl-5,6,7,8-tetrahydrofolate. Positions 215–371 (GLKLAIIGPP…ILKNIEEIAE (157 aa)) constitute a TrmE-type G domain. Residue N225 participates in K(+) binding. GTP is bound by residues 225-230 (NAGKSS), 244-250 (SNIAGTT), and 269-272 (DTAG). S229 lines the Mg(2+) pocket. The K(+) site is built by S244, I246, and T249. Residue T250 coordinates Mg(2+). A (6S)-5-formyl-5,6,7,8-tetrahydrofolate-binding site is contributed by K445.

Belongs to the TRAFAC class TrmE-Era-EngA-EngB-Septin-like GTPase superfamily. TrmE GTPase family. As to quaternary structure, homodimer. Heterotetramer of two MnmE and two MnmG subunits. It depends on K(+) as a cofactor.

It localises to the cytoplasm. In terms of biological role, exhibits a very high intrinsic GTPase hydrolysis rate. Involved in the addition of a carboxymethylaminomethyl (cmnm) group at the wobble position (U34) of certain tRNAs, forming tRNA-cmnm(5)s(2)U34. This is tRNA modification GTPase MnmE from Rickettsia bellii (strain OSU 85-389).